Reading from the N-terminus, the 121-residue chain is D-ornithine 4,5-aminomutase subunit alpha (121 aa).

As to quaternary structure, heterotetramer of 2 alpha (OraS) and 2 beta (OraE) subunits.

The enzyme catalyses D-ornithine = (2R,4S)-2,4-diaminopentanoate. Increased activity in the presence of dithiothreitol (DTT) in vitro. Inhibited by 1 mM potassium phosphate and potassium chloride. Inhibited by L-alpha-ornithine, D,L-alpha-lysine, L-beta-lysine (50%-60%), L-alpha-lysine (26%) and by delta-amino-n-valeric acid to a lesser extent. Significant decrease in activity is observed in the presence of 0.2 mM p-chloromercuribenzoate, N-ethylmaleimide and also by 2 mM iodoacetate to a lesser extent but not inhibited by arsenite. Its function is as follows. Component of a complex that catalyzes the reversible migration of the omega amino group of D-ornithine to C-4 to form (2R,4S)-2,4-diaminopentanoic acid. The role of OraS remains obscure; however, it seems to be required for a correct folding of the OraE subunit. The complex is active only on D-ornithine and 2,4-diaminopentanoic acid and not active on L-ornithine, L-beta-lysine, L-alpha-lysine or D-alpha-lysine. This chain is D-ornithine 4,5-aminomutase subunit alpha (oraS), found in Acetoanaerobium sticklandii (strain ATCC 12662 / DSM 519 / JCM 1433 / CCUG 9281 / NCIMB 10654 / HF) (Clostridium sticklandii).